Consider the following 431-residue polypeptide: 3-deoxy-D-manno-octulosonic acid transferase (431 aa).

The chain crosses the membrane as a helical; Signal-anchor span at residues 5–27 (WLTSRLYDAFLVCAFFVSAPRIF). Glutamate 67 serves as the catalytic Proton acceptor. CMP-binding positions include 275–276 (PR), 315–317 (MGV), and 342–345 (NLLE).

The protein belongs to the glycosyltransferase group 1 family. Glycosyltransferase 30 subfamily.

Its subcellular location is the cell inner membrane. It carries out the reaction lipid IVA (E. coli) + CMP-3-deoxy-beta-D-manno-octulosonate = alpha-Kdo-(2-&gt;6)-lipid IVA (E. coli) + CMP + H(+). The enzyme catalyses alpha-Kdo-(2-&gt;6)-lipid IVA (E. coli) + CMP-3-deoxy-beta-D-manno-octulosonate = alpha-Kdo-(2-&gt;4)-alpha-Kdo-(2-&gt;6)-lipid IVA (E. coli) + CMP + H(+). The catalysed reaction is alpha-Kdo-(2-&gt;4)-alpha-Kdo-(2-&gt;6)-lipid IVA (E. coli) + CMP-3-deoxy-beta-D-manno-octulosonate = alpha-Kdo-(2-&gt;8)-alpha-Kdo-(2-&gt;4)-alpha-Kdo-(2-&gt;6)-lipid IVA (E. coli) + CMP + H(+). It participates in bacterial outer membrane biogenesis; LPS core biosynthesis. In terms of biological role, involved in lipopolysaccharide (LPS) biosynthesis. Catalyzes the transfer of three 3-deoxy-D-manno-octulosonate (Kdo) residues from CMP-Kdo to lipid IV(A), the tetraacyldisaccharide-1,4'-bisphosphate precursor of lipid A. Thus generates the genus-specific LPS epitope of Chlamydia, composed of the trisaccharide alpha-Kdo-(2-&gt;8)-alpha-Kdo-(2-&gt;4)-alpha-Kdo. This chain is 3-deoxy-D-manno-octulosonic acid transferase (waaA), found in Chlamydia trachomatis serovar D (strain ATCC VR-885 / DSM 19411 / UW-3/Cx).